The sequence spans 164 residues: MEMTNAQRLILSNQYKMMTMLDPANAERYRRLQTIIERGYGLQMRELDREFGELKEETCRTIIDIMDMYHALYVSWSNLQDQQSIDERRVTFLGFDAATEARYLGYVRFMVNVEGRYTHFDAGTHGFNAQTPMWEKYQRMLNVWHACPRQYHLSANEINQIINA.

It belongs to the UPF0304 family.

This Shigella flexneri protein is UPF0304 protein YfbU.